A 411-amino-acid polypeptide reads, in one-letter code: Arginine deiminase (411 aa).

Cysteine 401 serves as the catalytic Amidino-cysteine intermediate.

This sequence belongs to the arginine deiminase family.

The protein resides in the cytoplasm. The enzyme catalyses L-arginine + H2O = L-citrulline + NH4(+). It functions in the pathway amino-acid degradation; L-arginine degradation via ADI pathway; carbamoyl phosphate from L-arginine: step 1/2. This is Arginine deiminase from Staphylococcus aureus (strain bovine RF122 / ET3-1).